Consider the following 141-residue polypeptide: Vesicle-associated membrane protein 4 (141 aa).

A disordered region spans residues 1–51 (MPPKFKRHLNDDDVTGSVKSERRNLLEDDSDEEEDFFLRGPSGPRFGPRND). Residues 1-115 (MPPKFKRHLN…RRQMWWRGCK (115 aa)) are Cytoplasmic-facing. S17 and S30 each carry phosphoserine. Residues 52 to 112 (KIKHVQNQVD…KQLRRQMWWR (61 aa)) form the v-SNARE coiled-coil homology domain. Residues 116 to 136 (IKAIMALVAAILLLVIIILIV) form a helical; Anchor for type IV membrane protein membrane-spanning segment. Residues 137–141 (MKYRT) are Vesicular-facing.

Belongs to the synaptobrevin family. Identified in a complex containing STX6, STX12, VAMP4 and VTI1A. Interacts with BAIAP3; this interaction is increased in the presence of calcium.

Its subcellular location is the golgi apparatus. The protein localises to the trans-Golgi network membrane. In terms of biological role, involved in the pathway that functions to remove an inhibitor (probably synaptotagmin-4) of calcium-triggered exocytosis during the maturation of secretory granules. May be a marker for this sorting pathway that is critical for remodeling the secretory response of granule. This Homo sapiens (Human) protein is Vesicle-associated membrane protein 4 (VAMP4).